A 719-amino-acid chain; its full sequence is Plasmin and fibronectin-binding protein A (719 aa).

A signal peptide spans Met1–Ile45. Disordered regions lie at residues Pro56–Val76 and Ile109–Asn128. 5 PbH1 repeats span residues Ser287–Gly310, Ser362–Ala384, Pro397–Gly419, Val497–Arg523, and Ser525–Asp546. A coiled-coil region spans residues Asn601 to Asn658. Residues Lys606–Gln617 show a composition bias toward basic and acidic residues. Positions Lys606–Glu655 are disordered. Over residues Val623 to Asn634 the composition is skewed to polar residues. Basic and acidic residues predominate over residues Ser635 to Glu655. Residues Leu685–Gly689 carry the LPXTG sorting signal motif. Pentaglycyl murein peptidoglycan amidated threonine is present on Thr688. The propeptide at Gly689 to Lys719 is removed by sortase.

It localises to the secreted. The protein localises to the cell wall. Functionally, acts as a fibronectin-dependent adhesin and invasin. Binds host (in this case human) fibronectin, plasmin, plasminogen, and human serum albumin. Where the bacteria adhere to human cells there is major recruitment of microvilli which seem to fuse to cover the streptococcal chains. Antibodies to this protein reduce bacterial growth in human blood. This is Plasmin and fibronectin-binding protein A (pfbA) from Streptococcus pneumoniae (strain ATCC BAA-255 / R6).